Consider the following 322-residue polypeptide: Cytochrome c biogenesis protein CcsA (322 aa).

The next 8 helical transmembrane spans lie at Ile9–Leu29, Gly44–Gly64, Leu71–Phe91, Leu98–Leu118, Met143–Ile163, Val226–Asn246, Trp253–Leu273, and Ala287–Leu307.

The protein belongs to the CcmF/CycK/Ccl1/NrfE/CcsA family. In terms of assembly, may interact with Ccs1.

The protein resides in the plastid. It is found in the chloroplast thylakoid membrane. Required during biogenesis of c-type cytochromes (cytochrome c6 and cytochrome f) at the step of heme attachment. The chain is Cytochrome c biogenesis protein CcsA from Helianthus annuus (Common sunflower).